Consider the following 363-residue polypeptide: Outer membrane porin F (363 aa).

The N-terminal stretch at 1–22 (MMKRKILAAVIPALLAAATANA) is a signal peptide.

It belongs to the Gram-negative porin family. As to quaternary structure, homotrimer. Forms mixed heterotrimers with OmpC and with PhoE; other mixed heterotrimers with other porins are also probable.

The protein localises to the cell outer membrane. Forms pores that allow passive diffusion of small molecules across the outer membrane. In Salmonella typhimurium (strain SL1344), this protein is Outer membrane porin F.